Reading from the N-terminus, the 244-residue chain is MGCRDVHAATVLSFLCGIASVAGLFAGTLLPNWRKLRLITFNRNEKNLTIYTGLWVKCARYDGSSDCLMYDRTWYLSVDQLDLRVLQFALPLSIVIAMGALLLCLIGMCNTAFNSSVPNIKLAKCLVNSAGCHLVAGLLFFLAGTVSLSPSIWAIFYNSHLNRKFEPVFTFDYAVFVTIASSGGLFMTALLLFVWYCACKSLSSPFWQPLYSHAPGMHTYSQPYSSRSRLSAIEIDIPVVSHST.

Topologically, residues 1-10 (MGCRDVHAAT) are cytoplasmic. The chain crosses the membrane as a helical span at residues 11–31 (VLSFLCGIASVAGLFAGTLLP). Topologically, residues 32 to 87 (NWRKLRLITFNRNEKNLTIYTGLWVKCARYDGSSDCLMYDRTWYLSVDQLDLRVLQ) are extracellular. A helical transmembrane segment spans residues 88 to 108 (FALPLSIVIAMGALLLCLIGM). The Cytoplasmic segment spans residues 109-135 (CNTAFNSSVPNIKLAKCLVNSAGCHLV). A helical transmembrane segment spans residues 136 to 156 (AGLLFFLAGTVSLSPSIWAIF). Topologically, residues 157-174 (YNSHLNRKFEPVFTFDYA) are extracellular. The helical transmembrane segment at 175–195 (VFVTIASSGGLFMTALLLFVW) threads the bilayer. Topologically, residues 196–244 (YCACKSLSSPFWQPLYSHAPGMHTYSQPYSSRSRLSAIEIDIPVVSHST) are cytoplasmic. 2 positions are modified to phosphoserine: Ser228 and Ser231.

This sequence belongs to the claudin family. As to quaternary structure, interacts with OCLN.

Its subcellular location is the cell junction. The protein resides in the tight junction. It localises to the cell membrane. Its function is as follows. Plays a major role in tight junction-specific obliteration of the intercellular space, through calcium-independent cell-adhesion activity. The chain is Claudin-12 (Cldn12) from Mus musculus (Mouse).